Reading from the N-terminus, the 453-residue chain is MKTLSPAVITLLWRQDAAEFYFSRLSHLPWAMLLHSGYADHPYSRFDIVVAEPICTLTTFGKETVVSESEKRTTTTDDPLQVLQQVLDRADIRPTHNEDLPFQGGALGLFGYDLGRRFESLPEIAEQDIVLPDMAVGIYDWALIVDHQRHTVSLLSHNDVNARRAWLESQQFSPQEDFTLTSDWQSNMTREQYGEKFRQVQEYLHSGDCYQVNLAQRFHATYSGDEWQAFLQLNQANRAPFSAFLRLEQGAILSLSPERFILCDNSEIQTRPIKGTLPRLPDPQEDSKQAVKLANSAKDRAENLMIVDLMRNDIGRVAVAGSVKVPELFVVEPFPAVHHLVSTITAQLPEQLHASDLLRAAFPGGSITGAPKVRAMEIIDELEPQRRNAWCGSIGYLSFCGNMDTSITIRTLTAINGQIFCSAGGGIVADSQEEAEYQETFDKVNRILKQLEK.

Residues S36, 43–46, and 240–242 each bind L-tryptophan; these read YSRF and PFS. E258 serves as the catalytic Proton donor. The active-site N6-(4-deoxychorismate)-lysine intermediate is K274.

The protein belongs to the anthranilate synthase component I family. As to quaternary structure, monomer. Heterodimer consisting of two non-identical subunits: a glutamine amidotransferase subunit (PabA) and a aminodeoxychorismate synthase subunit (PabB). It depends on Mg(2+) as a cofactor.

It carries out the reaction chorismate + L-glutamine = 4-amino-4-deoxychorismate + L-glutamate. Its pathway is cofactor biosynthesis; tetrahydrofolate biosynthesis; 4-aminobenzoate from chorismate: step 1/2. Its activity is regulated as follows. Inhibited by 6-diazo-5-oxo-L-norleucine (DON). The inhibition is competitive with glutamine but uncompetitive with chorismate. Also inhibited by 2-fluorochorismate. In terms of biological role, part of a heterodimeric complex that catalyzes the two-step biosynthesis of 4-amino-4-deoxychorismate (ADC), a precursor of p-aminobenzoate (PABA) and tetrahydrofolate. In the first step, a glutamine amidotransferase (PabA) generates ammonia as a substrate that, along with chorismate, is used in the second step, catalyzed by aminodeoxychorismate synthase (PabB) to produce ADC. PabB, in the absence of PabA, can catalyze the formation of ADC in the presence of exogenous ammonia. This is Aminodeoxychorismate synthase component 1 (pabB) from Escherichia coli (strain K12).